Here is a 1943-residue protein sequence, read N- to C-terminus: Sickle tail protein homolog (1943 aa).

2 disordered regions span residues Met-1–Leu-79 and Gln-112–Asn-177. Residues Ala-38–Leu-47 are compositionally biased toward basic and acidic residues. Positions Ser-48–Asn-62 are enriched in polar residues. Ser-169 carries the post-translational modification Phosphoserine. Tyr-244 is subject to Phosphotyrosine. A disordered region spans residues Ala-290–Pro-331. The span at His-308–Ser-328 shows a compositional bias: pro residues. Residue Ser-357 is glycosylated (O-linked (GlcNAc) serine). A phosphoserine mark is found at Ser-361 and Ser-365. Phosphotyrosine is present on Tyr-393. A disordered region spans residues Arg-456–His-476. Thr-470 is modified (phosphothreonine). 2 positions are modified to phosphoserine: Ser-474 and Ser-526. 2 coiled-coil regions span residues Arg-557–Leu-581 and Met-644–Ile-685. The residue at position 809 (Ser-809) is a Phosphoserine. Residues Val-848–Ser-874 are disordered. Residues Ser-957 to Lys-985 adopt a coiled-coil conformation. 3 disordered regions span residues Pro-1003–Ser-1230, Lys-1305–Ser-1329, and Pro-1352–Asn-1377. Residues Ser-1027, Ser-1030, Ser-1033, and Ser-1044 each carry the phosphoserine modification. Over residues Ser-1044–Arg-1053 the composition is skewed to pro residues. Composition is skewed to basic and acidic residues over residues Glu-1155 to Arg-1167, Pro-1174 to Val-1192, and Lys-1305 to His-1318. The span at Ser-1368–Asn-1377 shows a compositional bias: polar residues. Phosphoserine is present on Ser-1461. The stretch at Phe-1464–Asp-1490 forms a coiled coil. Disordered stretches follow at residues Glu-1481 to Lys-1572, Glu-1606 to Lys-1660, and Glu-1677 to Ser-1943. 2 stretches are compositionally biased toward polar residues: residues Ser-1491–Met-1501 and Arg-1512–Pro-1533. Composition is skewed to basic and acidic residues over residues Asn-1539 to His-1548 and Gly-1612 to Ile-1625. The span at Gln-1643–Ser-1653 shows a compositional bias: polar residues. A coiled-coil region spans residues Asp-1656 to Lys-1686. 2 stretches are compositionally biased toward polar residues: residues Thr-1691 to Ile-1706 and Ile-1731 to Arg-1747. Ser-1739 carries the phosphoserine modification. The segment covering Lys-1763–Gln-1775 has biased composition (basic and acidic residues). The segment covering Ser-1806 to Leu-1825 has biased composition (low complexity). Composition is skewed to polar residues over residues Ser-1834–Gln-1843 and Leu-1853–His-1869. Ser-1841 carries the post-translational modification Phosphoserine. A compositionally biased stretch (low complexity) spans Ser-1892–Ser-1905. Residues Ser-1896, Ser-1899, and Ser-1902 each carry the phosphoserine modification. A compositionally biased stretch (polar residues) spans Leu-1906–Ser-1943.

Interacts with CPNE4 (via VWFA domain).

Its subcellular location is the cytoplasm. The protein localises to the cytoskeleton. It localises to the microtubule organizing center. It is found in the centrosome. Functionally, required for normal development of intervertebral disks. The protein is Sickle tail protein homolog (KIAA1217) of Homo sapiens (Human).